The primary structure comprises 98 residues: NADH-ubiquinone oxidoreductase chain 4L (98 aa).

Helical transmembrane passes span 1–21, 29–49, and 59–79; these read MTLI…GFLM, ALLC…LTVL, and MPII…ALLV.

This sequence belongs to the complex I subunit 4L family. Core subunit of respiratory chain NADH dehydrogenase (Complex I) which is composed of 45 different subunits.

The protein resides in the mitochondrion inner membrane. The enzyme catalyses a ubiquinone + NADH + 5 H(+)(in) = a ubiquinol + NAD(+) + 4 H(+)(out). In terms of biological role, core subunit of the mitochondrial membrane respiratory chain NADH dehydrogenase (Complex I) which catalyzes electron transfer from NADH through the respiratory chain, using ubiquinone as an electron acceptor. Part of the enzyme membrane arm which is embedded in the lipid bilayer and involved in proton translocation. This Inia geoffrensis (Amazon river dolphin) protein is NADH-ubiquinone oxidoreductase chain 4L (MT-ND4L).